A 238-amino-acid polypeptide reads, in one-letter code: MKNIQTLFQTLNITPQNLTLYKQALTHSSYSNEQNPPQEDNERLEFLGDAIVGLLMADYLYSQSKEDEGIMTKKRAQAVCERSLTIYAHNIELQNYLLLGKGEKNKDFNAKSIIADTFEALFGAIYLDLGYLTAKKVFHNIVLPHLAKTIYIIDFKTQLQEIVQSEKKTIQYKIVQEQGPAHSKNFVAEVYLEKNLLGTGEGSTKKAAEQKAAQQALSKVAKPKDLLNNKGGKEKELQ.

Residues 4–130 (IQTLFQTLNI…LFGAIYLDLG (127 aa)) form the RNase III domain. E45 serves as a coordination point for Mg(2+). The active site involves D49. Residues D116 and E119 each coordinate Mg(2+). The active site involves E119. The DRBM domain maps to 154-222 (DFKTQLQEIV…AQQALSKVAK (69 aa)). The disordered stretch occupies residues 215 to 238 (QALSKVAKPKDLLNNKGGKEKELQ). A compositionally biased stretch (basic and acidic residues) spans 222-238 (KPKDLLNNKGGKEKELQ).

It belongs to the ribonuclease III family. As to quaternary structure, homodimer. Requires Mg(2+) as cofactor.

Its subcellular location is the cytoplasm. The enzyme catalyses Endonucleolytic cleavage to 5'-phosphomonoester.. Functionally, digests double-stranded RNA. Involved in the processing of primary rRNA transcript to yield the immediate precursors to the large and small rRNAs (23S and 16S). Processes some mRNAs, and tRNAs when they are encoded in the rRNA operon. Processes pre-crRNA and tracrRNA of type II CRISPR loci if present in the organism. The chain is Ribonuclease 3 from Onion yellows phytoplasma (strain OY-M).